We begin with the raw amino-acid sequence, 317 residues long: 1-phosphofructokinase (317 aa).

ATP is bound by residues 223–228 and 254–255; these read SMGAEG and GD. D255 (proton acceptor) is an active-site residue.

Belongs to the carbohydrate kinase PfkB family.

The catalysed reaction is beta-D-fructose 1-phosphate + ATP = beta-D-fructose 1,6-bisphosphate + ADP + H(+). Its function is as follows. Catalyzes the ATP-dependent phosphorylation of fructose-l-phosphate to fructose-l,6-bisphosphate. The sequence is that of 1-phosphofructokinase from Vibrio cholerae serotype O1 (strain ATCC 39315 / El Tor Inaba N16961).